The following is a 1833-amino-acid chain: Proteasome activator complex subunit 4A (1833 aa).

HEAT repeat units lie at residues 460–504 and 983–1022; these read PEGP…LVDC and NFCC…NHSG. The disordered stretch occupies residues 1095–1122; the sequence is SSSPEPNPGAASEQEELEGRKREEQKNK. Residues 1111-1122 show a composition bias toward basic and acidic residues; it reads LEGRKREEQKNK. HEAT repeat units lie at residues 1164 to 1202, 1344 to 1382, 1626 to 1664, and 1670 to 1708; these read LPLP…QLKR, DAFL…GSKH, SDQI…YNLF, and AKAV…CNFL. The segment at 1640–1728 is bromodomain-like (BRDL); it reads SRSSSWHARY…ESLSKTRLPK (89 aa).

Belongs to the BLM10 family. Homodimer. Interacts with the 20S and 26S proteasomes.

Its subcellular location is the cytoplasm. It is found in the cytosol. It localises to the nucleus. The protein localises to the nucleus speckle. Associated component of the proteasome that specifically recognizes acetylated histones and promotes ATP- and ubiquitin-independent degradation of core histones during DNA damage response. Recognizes and binds acetylated histones via its bromodomain-like (BRDL) region and activates the proteasome by opening the gated channel for substrate entry. Binds to the core proteasome via its C-terminus, which occupies the same binding sites as the proteasomal ATPases, opening the closed structure of the proteasome via an active gating mechanism. involved in DNA damage response in somatic cells: binds to acetylated histones and promotes degradation of histones. The polypeptide is Proteasome activator complex subunit 4A (psme4a) (Danio rerio (Zebrafish)).